The chain runs to 574 residues: MSRRLIYVLNINRESTHKIQENEIYTYFSHCNIDHTSTELDFVVKNYDLNRRQPVTGYTALHCYLYNNYFTNDVLKILLNHGVDVTMKTSSGRMPVYILLTRCCNISHDVVIDMIDKDKNHLSHRDYSNLLLEYIKSRYMLLKEEDIDENIVSTLLDKGIDPNFKQDGYTALHYYYLCLAHVYKPGECRKPITIKKAKRIISLFIQHGANLNALDNCGNTPFHLYLSIEMCNNIHMTKMLLTFNPNFKICNNHGLTPILCYITSDYIQHDILVMLIHHYETNVGEMPIDERRIIVFEFIKTYSTRPADSITYLMNRFKNIDIYTRYEGKTLLHVACEYNNTHVIDYLIRINGDINALTDNNKHATQLIIDNKENSPYTINCLLYILRYIVDKNVIRSLVDQLPSLPIFDIKSFEKFISYCILLDDTFYNRHVRNRNSKTYRYAFSKYMSFDKYDGIITKCHKETILLKLSTVLDTTLYAVLRCHNSKKLRRYLNELKKYNNDKSFKIYSNIMNERYLNVYYKDMYVSKVYDKLFPVFTDKNCLLTLLPSEIIYEILYMLTINDLYNISYPPTKV.

ANK repeat units follow at residues 56–87 (TGYT…DVTM), 135–164 (IKSR…DPNF), 167–213 (DGYT…NLNA), 217–249 (CGNT…NFKI), 253–285 (HGLT…NVGE), and 327–356 (EGKT…DINA). Residues 541–574 (NCLLTLLPSEIIYEILYMLTINDLYNISYPPTKV) enclose the F-box domain.

This is Ankyrin repeat protein B18 from Vaccinia virus (strain Ankara) (VACV).